Consider the following 1030-residue polypeptide: MENREPKLKQAPYFRCEKGPNWVPVCQKCEACVLAWKIFATKEWFRRVNDISQRRFLVSILGQLNSLYLLQYFQNILETTQGKDFIYNRSRIKLSRKGGKEEEVVKSSLNQMLDKTVERKMKEILYWFGNSTHRTKANYTLLLLQMCDSNLLLTAANVIRVLFMKEWNSISGLHDDTPDVMFFPEKKYSGTQDTSYVSWAARPKPVSFPMSKHLGNKLGTENVDRETTEGKGESSLQCIHEMNRQIFGKGGMSRLGDDPCNLLLSLDHVQLLSSGYSKYRDFIRDLPLHLSKYILRMLDKHSLNRCIFVSQHWATLAQQVKVDQSMHSFIQNQISLLQVTKEEKQAYTGSYTRGIDPNYANKVSIPVPKIVDDGKRSRSKNQKWKLRTKTDYNLWNAYQNQETQLVQMEERNVFCGTYNIRVLSDTFDQNRIIHYNGGDLMAISSNRKIHLLDIMQTKELPIEFRGHAGSVRALFLSEEDNILLSGSYDLSIRYWDVKTGACVRIFYGHQGTITCLDVYKNRLVSGAKDGQVKEWDIETGKCLKTFKHKDPILAAKISETYIVSSCERGIVKVWHVVTAQLQKTLTGHEGAVKCLFFNEWHLVSGGADGLVMAWSMVGKYERCLMAFKHPKEVLQVSLLYLRVISACGDGKIRIYNFLNGNCLKVIKVDARGDPVLSFFYQGNRMVAHTDSNILVFQFENVKWQYSSDKNKVKKSKDKEEEREETSLGDEHSRSTIQGHSLKDSVSSKQEFSKSRVHLKQTKNLSSDDMETPVGEVSHPLQKLWKVPMTPDRFLLTISALQQAHNSEEFAYPHRPRPQVIDAWGPSIPYPRKVLSLKGKSVQHAVDQLRSSNLPTGVRQTNIPLEIQKLQPNLKKSLHSPRVQATVPQPSLIRPKVSDSLRGDEHLTSSIDGTMRRAGPLTSMQVIKPNRMLAPRGGTATLSPKKERPRFYTTLDPLRMNTGFMLMTVKEEKEFAEAKMKEYEASVSTKEVDPGKASKAAWIRKIKGLPIDNFMKEGKTAAPELGQNVFI.

Residues 280-329 enclose the F-box domain; sequence RDFIRDLPLHLSKYILRMLDKHSLNRCIFVSQHWATLAQQVKVDQSMHSF. WD repeat units follow at residues 466–505, 508–547, 549–584, 587–624, and 626–667; these read GHAG…CVRI, GHQG…KTFK, KDPI…LQKT, GHEG…ERCL, and AFKH…KVIK. Residues 709–773 form a disordered region; it reads KNKVKKSKDK…LSSDDMETPV (65 aa). The span at 716 to 733 shows a compositional bias: basic and acidic residues; the sequence is KDKEEEREETSLGDEHSR. The segment covering 734–749 has biased composition (polar residues); the sequence is STIQGHSLKDSVSSKQ. Positions 963–992 form a coiled coil; the sequence is FMLMTVKEEKEFAEAKMKEYEASVSTKEVD.

Probable substrate-recognition component of a SCF (SKP1-CUL1-F-box protein)-type E3 ubiquitin ligase complex which mediates the ubiquitination and subsequent proteasomal degradation of target proteins. Overexpression is leading to degradation of CBX5 and CBX1. The protein is F-box/WD repeat-containing protein 10 (Fbxw10) of Mus musculus (Mouse).